A 401-amino-acid chain; its full sequence is Argininosuccinate synthase (401 aa).

An ATP-binding site is contributed by 10-18 (AYSGGVDTS). Y89 is an L-citrulline binding site. Residue G119 coordinates ATP. L-aspartate contacts are provided by T121, N125, and D126. Residue N125 coordinates L-citrulline. L-citrulline is bound by residues R129, S177, S186, E262, and Y274.

It belongs to the argininosuccinate synthase family. Type 1 subfamily. Homotetramer.

The protein resides in the cytoplasm. The catalysed reaction is L-citrulline + L-aspartate + ATP = 2-(N(omega)-L-arginino)succinate + AMP + diphosphate + H(+). The protein operates within amino-acid biosynthesis; L-arginine biosynthesis; L-arginine from L-ornithine and carbamoyl phosphate: step 2/3. The polypeptide is Argininosuccinate synthase (Thermosynechococcus vestitus (strain NIES-2133 / IAM M-273 / BP-1)).